We begin with the raw amino-acid sequence, 158 residues long: 2-C-methyl-D-erythritol 2,4-cyclodiphosphate synthase (158 aa).

Residues Asp9 and His11 each contribute to the a divalent metal cation site. Residues 9 to 11 and 35 to 36 contribute to the 4-CDP-2-C-methyl-D-erythritol 2-phosphate site; these read DVH and HS. His43 is an a divalent metal cation binding site. 4-CDP-2-C-methyl-D-erythritol 2-phosphate is bound by residues 57–59, 62–66, 101–107, 133–136, Phe140, and Arg143; these read DIG, FPDTD, AQKPKMA, and TTTE.

Belongs to the IspF family. Homotrimer. Requires a divalent metal cation as cofactor.

The enzyme catalyses 4-CDP-2-C-methyl-D-erythritol 2-phosphate = 2-C-methyl-D-erythritol 2,4-cyclic diphosphate + CMP. The protein operates within isoprenoid biosynthesis; isopentenyl diphosphate biosynthesis via DXP pathway; isopentenyl diphosphate from 1-deoxy-D-xylulose 5-phosphate: step 4/6. Involved in the biosynthesis of isopentenyl diphosphate (IPP) and dimethylallyl diphosphate (DMAPP), two major building blocks of isoprenoid compounds. Catalyzes the conversion of 4-diphosphocytidyl-2-C-methyl-D-erythritol 2-phosphate (CDP-ME2P) to 2-C-methyl-D-erythritol 2,4-cyclodiphosphate (ME-CPP) with a corresponding release of cytidine 5-monophosphate (CMP). The protein is 2-C-methyl-D-erythritol 2,4-cyclodiphosphate synthase of Bacillus cereus (strain ATCC 10987 / NRS 248).